A 557-amino-acid polypeptide reads, in one-letter code: Inositol-3-phosphate synthase 1 (557 aa).

Residues Gly-67, Gly-68, Asn-69, Asn-70, Asp-141, Ser-177, Val-178, Gln-188, Arg-191, Thr-228, Ala-229, Asn-230, Thr-231, Gly-278, Ser-279, Asp-303, Ser-306, Asn-337, Asn-338, Asp-339, and Lys-352 each contribute to the NAD(+) site. Residue Ser-279 is modified to Phosphoserine. The residue at position 357 (Ser-357) is a Phosphoserine. 4 residues coordinate NAD(+): Gly-390, Asp-391, Asp-419, and Ser-420. Ser-523 bears the Phosphoserine mark. The segment at 527 to 557 (CKKGSAPTAPNGCTGDANGHSQAEAPQMPTT) is disordered.

The protein belongs to the myo-inositol 1-phosphate synthase family. NAD(+) is required as a cofactor. As to expression, expressed in testis (at protein level).

The protein resides in the cytoplasm. The catalysed reaction is D-glucose 6-phosphate = 1D-myo-inositol 3-phosphate. It functions in the pathway polyol metabolism; myo-inositol biosynthesis; myo-inositol from D-glucose 6-phosphate: step 1/2. Key enzyme in myo-inositol biosynthesis pathway that catalyzes the conversion of glucose 6-phosphate to 1-myo-inositol 1-phosphate in a NAD-dependent manner. Rate-limiting enzyme in the synthesis of all inositol-containing compounds. This Bos taurus (Bovine) protein is Inositol-3-phosphate synthase 1 (ISYNA1).